The primary structure comprises 91 residues: DNA-directed RNA polymerase subunit Rpo11 (91 aa).

The protein belongs to the archaeal Rpo11/eukaryotic RPB11/RPC19 RNA polymerase subunit family. Part of the RNA polymerase complex.

The protein resides in the cytoplasm. The enzyme catalyses RNA(n) + a ribonucleoside 5'-triphosphate = RNA(n+1) + diphosphate. Its function is as follows. DNA-dependent RNA polymerase (RNAP) catalyzes the transcription of DNA into RNA using the four ribonucleoside triphosphates as substrates. This Methanococcoides burtonii (strain DSM 6242 / NBRC 107633 / OCM 468 / ACE-M) protein is DNA-directed RNA polymerase subunit Rpo11.